The chain runs to 484 residues: Glycogen synthase 2 (484 aa).

R15 provides a ligand contact to ADP-alpha-D-glucose.

This sequence belongs to the glycosyltransferase 1 family. Bacterial/plant glycogen synthase subfamily.

The enzyme catalyses [(1-&gt;4)-alpha-D-glucosyl](n) + ADP-alpha-D-glucose = [(1-&gt;4)-alpha-D-glucosyl](n+1) + ADP + H(+). Its pathway is glycan biosynthesis; glycogen biosynthesis. Functionally, synthesizes alpha-1,4-glucan chains using ADP-glucose. The sequence is that of Glycogen synthase 2 from Geobacter sulfurreducens (strain ATCC 51573 / DSM 12127 / PCA).